A 204-amino-acid polypeptide reads, in one-letter code: Large ribosomal subunit protein uL4 (204 aa).

The segment at 49–75 (TKGRSDVSGGGKKPWRQKGRGGARAGS) is disordered.

Belongs to the universal ribosomal protein uL4 family. As to quaternary structure, part of the 50S ribosomal subunit.

In terms of biological role, one of the primary rRNA binding proteins, this protein initially binds near the 5'-end of the 23S rRNA. It is important during the early stages of 50S assembly. It makes multiple contacts with different domains of the 23S rRNA in the assembled 50S subunit and ribosome. Its function is as follows. Forms part of the polypeptide exit tunnel. This Campylobacter jejuni subsp. jejuni serotype O:23/36 (strain 81-176) protein is Large ribosomal subunit protein uL4.